The chain runs to 264 residues: tRNA (guanine-N(1)-)-methyltransferase (264 aa).

S-adenosyl-L-methionine is bound by residues Gly-116 and 136 to 141 (VGDFVL).

This sequence belongs to the RNA methyltransferase TrmD family. As to quaternary structure, homodimer.

The protein localises to the cytoplasm. The enzyme catalyses guanosine(37) in tRNA + S-adenosyl-L-methionine = N(1)-methylguanosine(37) in tRNA + S-adenosyl-L-homocysteine + H(+). Its function is as follows. Specifically methylates guanosine-37 in various tRNAs. This is tRNA (guanine-N(1)-)-methyltransferase from Koribacter versatilis (strain Ellin345).